We begin with the raw amino-acid sequence, 292 residues long: Ribosomal protein L11 methyltransferase (292 aa).

Threonine 143, glycine 164, aspartate 186, and asparagine 228 together coordinate S-adenosyl-L-methionine.

It belongs to the methyltransferase superfamily. PrmA family.

Its subcellular location is the cytoplasm. The enzyme catalyses L-lysyl-[protein] + 3 S-adenosyl-L-methionine = N(6),N(6),N(6)-trimethyl-L-lysyl-[protein] + 3 S-adenosyl-L-homocysteine + 3 H(+). Functionally, methylates ribosomal protein L11. This chain is Ribosomal protein L11 methyltransferase, found in Tolumonas auensis (strain DSM 9187 / NBRC 110442 / TA 4).